The following is an 87-amino-acid chain: MAEALKEHIYIIPLREVKRAPRWKRGNTAIKDIRAFLVRHMKSEDVKLDKSINEKVWENGSSKPPRKIRVRAMKFEDGQVQAELAEE.

It belongs to the eukaryotic ribosomal protein eL31 family.

The polypeptide is Large ribosomal subunit protein eL31 (Methanoculleus marisnigri (strain ATCC 35101 / DSM 1498 / JR1)).